Reading from the N-terminus, the 552-residue chain is NADH-ubiquinone oxidoreductase chain 5 (552 aa).

15 helical membrane-spanning segments follow: residues 11-31, 36-56, 68-88, 89-109, 121-141, 152-172, 196-216, 229-249, 256-274, 287-307, 322-342, 365-386, 406-426, 453-473, and 532-552; these read PVTI…PFGL, LAMT…AYAI, FYII…SDNY, LMMF…ISFW, SAIL…GLMI, IALV…LLLL, TPVS…YVLV, LLII…IAIV, VIAL…AIGI, HAFF…SFVA, LPFS…IPGL, ILYY…RVLY, SLGM…IGYS, AYIK…LVYV, and SRAV…LFFI.

The protein belongs to the complex I subunit 5 family.

It is found in the mitochondrion inner membrane. The catalysed reaction is a ubiquinone + NADH + 5 H(+)(in) = a ubiquinol + NAD(+) + 4 H(+)(out). Its function is as follows. Core subunit of the mitochondrial membrane respiratory chain NADH dehydrogenase (Complex I) that is believed to belong to the minimal assembly required for catalysis. Complex I functions in the transfer of electrons from NADH to the respiratory chain. The immediate electron acceptor for the enzyme is believed to be ubiquinone. In Candida albicans (strain SC5314 / ATCC MYA-2876) (Yeast), this protein is NADH-ubiquinone oxidoreductase chain 5 (NAD5).